The primary structure comprises 103 residues: Large ribosomal subunit protein bL21 (103 aa).

The protein belongs to the bacterial ribosomal protein bL21 family. In terms of assembly, part of the 50S ribosomal subunit. Contacts protein L20.

In terms of biological role, this protein binds to 23S rRNA in the presence of protein L20. The chain is Large ribosomal subunit protein bL21 from Vibrio atlanticus (strain LGP32) (Vibrio splendidus (strain Mel32)).